The following is a 322-amino-acid chain: MSDLEPAKNPEGASHVSVLLGEVVAALASGPGDMVIDGTFGAGGYTRAILATGASVTAFDRDPSVQRFAAEFSATDGRFRLIQDRFSQITEYLEDASVDGVTLDLGVSSMQLDEAERGFSFMRDGPLDMRMGADGPTAADLVNDLDHTELARILYVYGEEHASRRIASFIIKRREERPFTRTLDLAHVIERALGGRKGAKVHPATRSFQGLRIAVNAELDELEAGLLAAERVLKPGGRLAVVTFHSLEDRIVKNFLAERAGRTPGGSRHLPPVEAGAPPSFQLISSKAIAPGEAELAVNPRARSSKLRAAVRTTAPVWSEAS.

S-adenosyl-L-methionine-binding positions include 43-45, Asp60, Phe86, Asp104, and Gln111; that span reads GGY.

This sequence belongs to the methyltransferase superfamily. RsmH family.

It is found in the cytoplasm. The catalysed reaction is cytidine(1402) in 16S rRNA + S-adenosyl-L-methionine = N(4)-methylcytidine(1402) in 16S rRNA + S-adenosyl-L-homocysteine + H(+). In terms of biological role, specifically methylates the N4 position of cytidine in position 1402 (C1402) of 16S rRNA. This is Ribosomal RNA small subunit methyltransferase H from Caulobacter sp. (strain K31).